The primary structure comprises 446 residues: N-succinylarginine dihydrolase (446 aa).

Residues 19 to 28 (AGLSFGNEAS), Asn110, and 137 to 138 (HR) contribute to the substrate site. Glu174 is an active-site residue. Arg213 lines the substrate pocket. His249 is an active-site residue. Substrate contacts are provided by Asp251 and Asn364. Cys370 serves as the catalytic Nucleophile.

Belongs to the succinylarginine dihydrolase family. Homodimer.

It catalyses the reaction N(2)-succinyl-L-arginine + 2 H2O + 2 H(+) = N(2)-succinyl-L-ornithine + 2 NH4(+) + CO2. Its pathway is amino-acid degradation; L-arginine degradation via AST pathway; L-glutamate and succinate from L-arginine: step 2/5. Catalyzes the hydrolysis of N(2)-succinylarginine into N(2)-succinylornithine, ammonia and CO(2). This Serratia proteamaculans (strain 568) protein is N-succinylarginine dihydrolase.